A 111-amino-acid chain; its full sequence is Cyclin-dependent protein kinase inhibitor SMR2 (111 aa).

The disordered stretch occupies residues Met-1–Ile-66. The span at Glu-10–Leu-35 shows a compositional bias: basic and acidic residues.

In terms of assembly, interacts with CYCD2-1. Interacts with CDKB1-1. As to expression, expressed at low levels in roots and stems. Expressed in the root vascular tissue.

The protein localises to the nucleus. Cyclin-dependent protein kinase (CDK) inhibitor that restricts cell proliferation and cooperates with SIM and SMR1 to promote endoreplication during leaf development. This chain is Cyclin-dependent protein kinase inhibitor SMR2, found in Arabidopsis thaliana (Mouse-ear cress).